The chain runs to 183 residues: Large ribosomal subunit protein uL6 (183 aa).

The protein belongs to the universal ribosomal protein uL6 family. As to quaternary structure, part of the 50S ribosomal subunit.

In terms of biological role, this protein binds to the 23S rRNA, and is important in its secondary structure. It is located near the subunit interface in the base of the L7/L12 stalk, and near the tRNA binding site of the peptidyltransferase center. This chain is Large ribosomal subunit protein uL6, found in Malacoplasma penetrans (strain HF-2) (Mycoplasma penetrans).